We begin with the raw amino-acid sequence, 697 residues long: Putative flagellar export/assembly protein LfhA (697 aa).

The next 7 membrane-spanning stretches (helical) occupy residues 19-39 (VPLVILCILAMVILPLPPALL), 40-60 (DILFTFNIVLAVMVLLVAVSA), 66-86 (FSLFPTILLITTLMRLTLNVA), 116-136 (GNFVVGFVVFIILMIINFIVV), 204-224 (AIAGMMILAINLIGGVCIGIF), 242-262 (IGDGLVAQIPSLLLSTAAAII), and 280-302 (LLASPSVLYTATGIMFVLAVVPG).

It belongs to the FHIPEP (flagella/HR/invasion proteins export pore) family.

It is found in the cell inner membrane. Functionally, part of the flagellar gene cluster Flag-2. However, the Flag-2 flagellar system could be inactive in strain 042 due to a frameshift in lfgC. The chain is Putative flagellar export/assembly protein LfhA from Escherichia coli O44:H18 (strain 042 / EAEC).